The sequence spans 250 residues: Ribosomal RNA small subunit methyltransferase J (250 aa).

S-adenosyl-L-methionine contacts are provided by residues 96 to 97 (RD) and Asp168.

Belongs to the methyltransferase superfamily. RsmJ family.

It is found in the cytoplasm. It catalyses the reaction guanosine(1516) in 16S rRNA + S-adenosyl-L-methionine = N(2)-methylguanosine(1516) in 16S rRNA + S-adenosyl-L-homocysteine + H(+). Functionally, specifically methylates the guanosine in position 1516 of 16S rRNA. This chain is Ribosomal RNA small subunit methyltransferase J, found in Neisseria meningitidis serogroup B (strain ATCC BAA-335 / MC58).